A 434-amino-acid chain; its full sequence is Serine protease HTRA2, mitochondrial (434 aa).

The disordered stretch occupies residues 34-65; sequence YSNNTANITTDSSSSSNNNSNRNNKNDNNNED. The span at 35–60 shows a compositional bias: low complexity; it reads SNNTANITTDSSSSSNNNSNRNNKND. Residues 74–92 form a helical membrane-spanning segment; it reads LVRFFVPFSLGAVASSLVM. Positions 85 to 88 match the IAP-binding motif; the sequence is AVAS. The tract at residues 151-314 is serine protease; the sequence is SNGSGFVIEQ…IPIDYVKVFL (164 aa). Residues His-169, Asp-201, and Ser-278 each act as charge relay system in the active site. In terms of domain architecture, PDZ spans 337-424; sequence MGITMLTLTP…NMIIMRGVKQ (88 aa).

Belongs to the peptidase S1C family. As to quaternary structure, interacts with th/DIAP1 (via BIR 2 domain).

The protein resides in the mitochondrion intermembrane space. Its subcellular location is the mitochondrion membrane. The enzyme catalyses Cleavage of non-polar aliphatic amino-acids at the P1 position, with a preference for Val, Ile and Met. At the P2 and P3 positions, Arg is selected most strongly with a secondary preference for other hydrophilic residues.. Its function is as follows. Serine protease that shows proteolytic activity against a non-specific substrate beta-casein. Promotes or induces cell death either by direct binding to and inhibition of BIRC proteins (also called inhibitor of apoptosis proteins, IAPs), leading to an increase in caspase activity, or by a BIRC inhibition-independent, caspase-independent and serine protease activity-dependent mechanism. Can antagonize antiapoptotic activity of th/Diap1 by directly inducing the degradation of th/Diap1. This is Serine protease HTRA2, mitochondrial from Drosophila willistoni (Fruit fly).